Consider the following 292-residue polypeptide: Ribosomal RNA small subunit methyltransferase A (292 aa).

N28, L30, G55, E76, D101, and N126 together coordinate S-adenosyl-L-methionine.

The protein belongs to the class I-like SAM-binding methyltransferase superfamily. rRNA adenine N(6)-methyltransferase family. RsmA subfamily.

It is found in the cytoplasm. The catalysed reaction is adenosine(1518)/adenosine(1519) in 16S rRNA + 4 S-adenosyl-L-methionine = N(6)-dimethyladenosine(1518)/N(6)-dimethyladenosine(1519) in 16S rRNA + 4 S-adenosyl-L-homocysteine + 4 H(+). Functionally, specifically dimethylates two adjacent adenosines (A1518 and A1519) in the loop of a conserved hairpin near the 3'-end of 16S rRNA in the 30S particle. May play a critical role in biogenesis of 30S subunits. This Bacillus thuringiensis (strain Al Hakam) protein is Ribosomal RNA small subunit methyltransferase A.